Reading from the N-terminus, the 392-residue chain is uncharacterized protein (392 aa).

Helical transmembrane passes span 2-23, 38-60, 73-95, 153-175, 195-217, 237-259, 272-291, 297-319, 331-353, and 357-379; these read WLAN…SLYI, SGYV…GRFG, GTGI…LFFL, FTYT…LFGV, VLSY…LIQT, VNLA…LLAR, RILI…QALA, LLVF…TAAI, VLGY…GGII, and FTIS…MLWI.

It belongs to the major facilitator superfamily.

Its subcellular location is the cell membrane. This is an uncharacterized protein from Bacillus subtilis (strain 168).